Consider the following 278-residue polypeptide: Para-Rep C1 (278 aa).

Residues 1 to 95 (MACSNWVFTR…VAGPWSYGDL (95 aa)) form the CRESS-DNA virus Rep endonuclease domain. Residues 8–11 (FTRN) carry the RCR-1 motif. Residues Glu-33 and His-39 each contribute to the a divalent metal cation site. The short motif at 39–41 (HIQ) is the RCR-2 element. The Nuclear localization signal motif lies at 48 to 69 (KKARFSTVKEIIGGNPHVEKMK). Tyr-78 (for DNA cleavage activity) is an active-site residue. An RCR-3 motif is present at residues 78 to 81 (YVQK). Glu-83 serves as a coordination point for a divalent metal cation. The Nuclear localization signal motif lies at 95-101 (LLKRGSH). 176-178 (GKS) provides a ligand contact to ATP.

It belongs to the nanoviridea/circoviridae replication-associated protein family. As to quaternary structure, homooligomer (Potential). Rep binds to repeated DNA motifs (iterons). Mg(2+) is required as a cofactor. Requires Mn(2+) as cofactor.

It localises to the host nucleus. The enzyme catalyses ATP + H2O = ADP + phosphate + H(+). Its function is as follows. Initiates and terminates the replication only of its own subviral DNA molecule. The closed circular ssDNA genome is first converted to a superhelical dsDNA. Rep binds a specific hairpin at the genome origin of replication. Introduces an endonucleolytic nick within the intergenic region of the genome, thereby initiating the rolling circle replication (RCR). Following cleavage, binds covalently to the 5'-phosphate of DNA as a tyrosyl ester. The cleavage gives rise to a free 3'-OH that serves as a primer for the cellular DNA polymerase. The polymerase synthesizes the (+) strand DNA by rolling circle mechanism. After one round of replication, a Rep-catalyzed nucleotidyl transfer reaction releases a circular single-stranded virus genome, thereby terminating the replication. Displays origin-specific DNA cleavage, nucleotidyl transferase, ATPase and helicase activities. The chain is Para-Rep C1 (C1) from Faba bean necrotic yellows C1 alphasatellite (FBNYC1A).